The primary structure comprises 283 residues: Polyamine aminopropyltransferase (283 aa).

Residues 3-236 (GIWFSELQTP…GLWAFSLGSK (234 aa)) form the PABS domain. Gln-32 contacts S-methyl-5'-thioadenosine. Spermidine-binding residues include His-63 and Asp-87. Residues Glu-107 and 138–139 (DG) each bind S-methyl-5'-thioadenosine. The active-site Proton acceptor is the Asp-156. 156-159 (DSTD) is a binding site for spermidine. Pro-163 contributes to the S-methyl-5'-thioadenosine binding site.

Belongs to the spermidine/spermine synthase family. Homodimer or homotetramer.

The protein localises to the cytoplasm. It catalyses the reaction S-adenosyl 3-(methylsulfanyl)propylamine + putrescine = S-methyl-5'-thioadenosine + spermidine + H(+). Its pathway is amine and polyamine biosynthesis; spermidine biosynthesis; spermidine from putrescine: step 1/1. Catalyzes the irreversible transfer of a propylamine group from the amino donor S-adenosylmethioninamine (decarboxy-AdoMet) to putrescine (1,4-diaminobutane) to yield spermidine. The protein is Polyamine aminopropyltransferase of Moorella thermoacetica (strain ATCC 39073 / JCM 9320).